A 426-amino-acid polypeptide reads, in one-letter code: Glutamate-1-semialdehyde 2,1-aminomutase (426 aa).

N6-(pyridoxal phosphate)lysine is present on lysine 265.

The protein belongs to the class-III pyridoxal-phosphate-dependent aminotransferase family. HemL subfamily. In terms of assembly, homodimer. It depends on pyridoxal 5'-phosphate as a cofactor.

The protein localises to the cytoplasm. It catalyses the reaction (S)-4-amino-5-oxopentanoate = 5-aminolevulinate. Its pathway is porphyrin-containing compound metabolism; protoporphyrin-IX biosynthesis; 5-aminolevulinate from L-glutamyl-tRNA(Glu): step 2/2. This chain is Glutamate-1-semialdehyde 2,1-aminomutase, found in Cellvibrio japonicus (strain Ueda107) (Pseudomonas fluorescens subsp. cellulosa).